Reading from the N-terminus, the 475-residue chain is UDP-N-acetylmuramate--L-alanine ligase (475 aa).

114–120 (GTHGKTT) serves as a coordination point for ATP.

It belongs to the MurCDEF family.

The protein resides in the cytoplasm. It catalyses the reaction UDP-N-acetyl-alpha-D-muramate + L-alanine + ATP = UDP-N-acetyl-alpha-D-muramoyl-L-alanine + ADP + phosphate + H(+). It participates in cell wall biogenesis; peptidoglycan biosynthesis. Cell wall formation. This Bartonella henselae (strain ATCC 49882 / DSM 28221 / CCUG 30454 / Houston 1) (Rochalimaea henselae) protein is UDP-N-acetylmuramate--L-alanine ligase.